Consider the following 377-residue polypeptide: Chorismate synthase (377 aa).

NADP(+) is bound by residues Arg-48 and Arg-54. FMN contacts are provided by residues 125 to 127 (RSS), 238 to 239 (NA), Gly-278, 293 to 297 (KPTSS), and Arg-319.

This sequence belongs to the chorismate synthase family. In terms of assembly, homotetramer. FMNH2 is required as a cofactor.

It carries out the reaction 5-O-(1-carboxyvinyl)-3-phosphoshikimate = chorismate + phosphate. It functions in the pathway metabolic intermediate biosynthesis; chorismate biosynthesis; chorismate from D-erythrose 4-phosphate and phosphoenolpyruvate: step 7/7. Its function is as follows. Catalyzes the anti-1,4-elimination of the C-3 phosphate and the C-6 proR hydrogen from 5-enolpyruvylshikimate-3-phosphate (EPSP) to yield chorismate, which is the branch point compound that serves as the starting substrate for the three terminal pathways of aromatic amino acid biosynthesis. This reaction introduces a second double bond into the aromatic ring system. The polypeptide is Chorismate synthase (Aromatoleum aromaticum (strain DSM 19018 / LMG 30748 / EbN1) (Azoarcus sp. (strain EbN1))).